An 841-amino-acid chain; its full sequence is 27S pre-rRNA (guanosine(2922)-2'-O)-methyltransferase (841 aa).

Positions 58, 60, 78, 94, and 119 each coordinate S-adenosyl-L-methionine. K159 serves as the catalytic Proton acceptor. Residues 360 to 389 are a coiled coil; it reads QEKQRLNVKRERRRKNEMKQKELQRMQMNM. S455 and S464 each carry phosphoserine. 2 disordered regions span residues 480–534 and 565–654; these read RDAK…DDEA and NNVE…HSRD. Positions 505-517 are enriched in basic and acidic residues; sequence SLEKKEEEGKDYI. A compositionally biased stretch (acidic residues) spans 518-534; sequence EDNDDEGVEGDSDDDEA. Phosphoserine is present on S529. A compositionally biased stretch (polar residues) spans 574–585; it reads NTVNDGIMSSES. A compositionally biased stretch (basic and acidic residues) spans 598–607; sequence HEEMHQKQDE. Composition is skewed to acidic residues over residues 608–621 and 629–641; these read ADSSDESSSDDSDF and ASEEFDSDYDSEE. Positions 642-654 are enriched in basic and acidic residues; that stretch reads EKNQTKKEKHSRD.

This sequence belongs to the class I-like SAM-binding methyltransferase superfamily. RNA methyltransferase RlmE family. SPB1 subfamily. As to quaternary structure, component of the nucleolar and nucleoplasmic pre-60S ribosomal particle. Interacts with the snoRNA-associated proteins NOP1 and NOP58.

The protein localises to the nucleus. The protein resides in the nucleolus. It catalyses the reaction guanosine(2922) in 27S pre-rRNA + S-adenosyl-L-methionine = 2'-O-methylguanosine(2922) in 27S pre-rRNA + S-adenosyl-L-homocysteine + H(+). Required for proper assembly of pre-ribosomal particles during the biogenesis of the 60S ribosomal subunit. Specifically methylates the guanosine in position 2922 of the 25S rRNA at the stage of 27S pre-rRNA maturation. Also methylates the uridine in position 2921 in the absence of methylation of this residue guided by snoRNA snR52 at the stage of 35S pre-rRNA maturation. This chain is 27S pre-rRNA (guanosine(2922)-2'-O)-methyltransferase, found in Saccharomyces cerevisiae (strain ATCC 204508 / S288c) (Baker's yeast).